The following is a 210-amino-acid chain: Small ribosomal subunit protein uS3 (210 aa).

The region spanning 17-86 is the KH type-2 domain; that stretch reads IDEFLEKELR…NPQIDVQEIK (70 aa).

Belongs to the universal ribosomal protein uS3 family. As to quaternary structure, part of the 30S ribosomal subunit.

Binds the lower part of the 30S subunit head. This chain is Small ribosomal subunit protein uS3, found in Pyrococcus abyssi (strain GE5 / Orsay).